Here is a 192-residue protein sequence, read N- to C-terminus: ER membrane protein complex subunit 8/9 homolog (192 aa).

The region spanning 5–135 (ISITTEALSK…LVSIDKVGSD (131 aa)) is the MPN domain.

This sequence belongs to the EMC8/EMC9 family.

In Dictyostelium discoideum (Social amoeba), this protein is ER membrane protein complex subunit 8/9 homolog.